Consider the following 938-residue polypeptide: Inner tegument protein (938 aa).

The tract at residues 457–938 (EIVDLLFSST…LVEPLLLKLG (482 aa)) is interaction with large tegument protein.

The protein belongs to the herpesviridae inner tegument protein family. Interacts (via C-terminus) with the large tegument protein/LTP (via N-terminus).

It localises to the virion tegument. Its subcellular location is the host cytoplasm. The protein localises to the host nucleus. The protein resides in the host Golgi apparatus. It is found in the host trans-Golgi network. Its function is as follows. Plays an essential role in cytoplasmic secondary envelopment during viral egress. Interacts with the capsid via the large tegument protein/LTP and participates in its transport to the host trans-Golgi network (TGN) where secondary envelopment occurs. Modulates tegumentation and capsid accumulation at the viral assembly complex. In Human herpesvirus 7 (strain JI) (HHV-7), this protein is Inner tegument protein (U30).